A 117-amino-acid polypeptide reads, in one-letter code: Non-specific lipid-transfer protein (117 aa).

The first 26 residues, 1-26 (MASSAVIKLACAVLLCIVVAAPYAEA), serve as a signal peptide directing secretion. Disulfide bonds link Cys-30-Cys-76, Cys-40-Cys-53, Cys-54-Cys-99, and Cys-74-Cys-113.

It belongs to the plant LTP family.

Its function is as follows. Plant non-specific lipid-transfer proteins transfer phospholipids as well as galactolipids across membranes. May play a role in wax or cutin deposition in the cell walls of expanding epidermal cells and certain secretory tissues. This is Non-specific lipid-transfer protein from Spinacia oleracea (Spinach).